We begin with the raw amino-acid sequence, 397 residues long: 8-amino-7-oxononanoate synthase (397 aa).

Arg23 provides a ligand contact to substrate. Position 110-111 (110-111 (GY)) interacts with pyridoxal 5'-phosphate. His135 lines the substrate pocket. Pyridoxal 5'-phosphate-binding residues include Ser181, His209, and Thr237. N6-(pyridoxal phosphate)lysine is present on Lys240. Residue Thr354 participates in substrate binding.

The protein belongs to the class-II pyridoxal-phosphate-dependent aminotransferase family. BioF subfamily. As to quaternary structure, homodimer. It depends on pyridoxal 5'-phosphate as a cofactor.

The enzyme catalyses 6-carboxyhexanoyl-[ACP] + L-alanine + H(+) = (8S)-8-amino-7-oxononanoate + holo-[ACP] + CO2. Its pathway is cofactor biosynthesis; biotin biosynthesis. Functionally, catalyzes the decarboxylative condensation of pimeloyl-[acyl-carrier protein] and L-alanine to produce 8-amino-7-oxononanoate (AON), [acyl-carrier protein], and carbon dioxide. This Anaeromyxobacter sp. (strain Fw109-5) protein is 8-amino-7-oxononanoate synthase.